A 303-amino-acid chain; its full sequence is uncharacterized protein (303 aa).

The protein belongs to the herpesviridae BBRF1 family.

This is an uncharacterized protein from Saimiriine herpesvirus 2 (strain 11) (SaHV-2).